We begin with the raw amino-acid sequence, 196 residues long: Probable phosphoheptose isomerase (196 aa).

An SIS domain is found at I43–Y196. N58 to G60 serves as a coordination point for substrate. Positions 67 and 71 each coordinate Zn(2+). Substrate-binding positions include E71, N100–D101, S126–S128, S131, and Q178. The Zn(2+) site is built by Q178 and H186.

Belongs to the SIS family. GmhA subfamily. Requires Zn(2+) as cofactor.

It is found in the cytoplasm. It carries out the reaction 2 D-sedoheptulose 7-phosphate = D-glycero-alpha-D-manno-heptose 7-phosphate + D-glycero-beta-D-manno-heptose 7-phosphate. It functions in the pathway carbohydrate biosynthesis; D-glycero-D-manno-heptose 7-phosphate biosynthesis; D-glycero-alpha-D-manno-heptose 7-phosphate and D-glycero-beta-D-manno-heptose 7-phosphate from sedoheptulose 7-phosphate: step 1/1. Catalyzes the isomerization of sedoheptulose 7-phosphate in D-glycero-D-manno-heptose 7-phosphate. The sequence is that of Probable phosphoheptose isomerase from Thermoplasma volcanium (strain ATCC 51530 / DSM 4299 / JCM 9571 / NBRC 15438 / GSS1).